Consider the following 311-residue polypeptide: Pyrimidine-specific ribonucleoside hydrolase RihA (311 aa).

H240 is a catalytic residue.

The protein belongs to the IUNH family. RihA subfamily.

Its function is as follows. Hydrolyzes cytidine or uridine to ribose and cytosine or uracil, respectively. The sequence is that of Pyrimidine-specific ribonucleoside hydrolase RihA from Salmonella gallinarum (strain 287/91 / NCTC 13346).